A 466-amino-acid chain; its full sequence is Soluble pyridine nucleotide transhydrogenase (466 aa).

36–45 (ERYQNVGGGC) is a binding site for FAD.

Belongs to the class-I pyridine nucleotide-disulfide oxidoreductase family. In terms of assembly, homooligomer; probable homooctamer. FAD serves as cofactor.

The protein resides in the cytoplasm. It catalyses the reaction NAD(+) + NADPH = NADH + NADP(+). Its function is as follows. Conversion of NADPH, generated by peripheral catabolic pathways, to NADH, which can enter the respiratory chain for energy generation. This chain is Soluble pyridine nucleotide transhydrogenase, found in Escherichia coli O6:H1 (strain CFT073 / ATCC 700928 / UPEC).